The chain runs to 248 residues: Coproheme decarboxylase (248 aa).

Residues arginine 130, 144-148 (YPMDK), histidine 171, glutamine 184, and serine 222 contribute to the Fe-coproporphyrin III site. Tyrosine 144 is a catalytic residue.

It belongs to the ChdC family. Type 1 subfamily. In terms of assembly, homopentamer. It depends on Fe-coproporphyrin III as a cofactor.

It carries out the reaction Fe-coproporphyrin III + 2 H2O2 + 2 H(+) = heme b + 2 CO2 + 4 H2O. The catalysed reaction is Fe-coproporphyrin III + H2O2 + H(+) = harderoheme III + CO2 + 2 H2O. It catalyses the reaction harderoheme III + H2O2 + H(+) = heme b + CO2 + 2 H2O. Its pathway is porphyrin-containing compound metabolism; protoheme biosynthesis. In terms of biological role, involved in coproporphyrin-dependent heme b biosynthesis. Catalyzes the decarboxylation of Fe-coproporphyrin III (coproheme) to heme b (protoheme IX), the last step of the pathway. The reaction occurs in a stepwise manner with a three-propionate intermediate. This is Coproheme decarboxylase from Geobacillus kaustophilus (strain HTA426).